A 63-amino-acid chain; its full sequence is Large ribosomal subunit protein uL29 (63 aa).

Belongs to the universal ribosomal protein uL29 family.

In Shewanella baltica (strain OS223), this protein is Large ribosomal subunit protein uL29.